Consider the following 881-residue polypeptide: Alanine--tRNA ligase (881 aa).

Zn(2+) contacts are provided by histidine 564, histidine 568, cysteine 666, and histidine 670.

Belongs to the class-II aminoacyl-tRNA synthetase family. It depends on Zn(2+) as a cofactor.

Its subcellular location is the cytoplasm. The catalysed reaction is tRNA(Ala) + L-alanine + ATP = L-alanyl-tRNA(Ala) + AMP + diphosphate. Its function is as follows. Catalyzes the attachment of alanine to tRNA(Ala) in a two-step reaction: alanine is first activated by ATP to form Ala-AMP and then transferred to the acceptor end of tRNA(Ala). Also edits incorrectly charged Ser-tRNA(Ala) and Gly-tRNA(Ala) via its editing domain. This chain is Alanine--tRNA ligase, found in Caldicellulosiruptor saccharolyticus (strain ATCC 43494 / DSM 8903 / Tp8T 6331).